Here is a 287-residue protein sequence, read N- to C-terminus: rRNA adenine N-6-methyltransferase (287 aa).

Basic residues predominate over residues 1-13 (MKKKNHKYRGKKL). The disordered stretch occupies residues 1-21 (MKKKNHKYRGKKLNRGESPNF). Positions 25, 27, 52, 73, 98, and 114 each coordinate S-adenosyl-L-methionine.

This sequence belongs to the class I-like SAM-binding methyltransferase superfamily. rRNA adenine N(6)-methyltransferase family. As to quaternary structure, homodimer.

In terms of biological role, involved in erythromycin resistance. The protein is rRNA adenine N-6-methyltransferase (ermJ) of Bacillus anthracis.